A 96-amino-acid polypeptide reads, in one-letter code: Co-chaperonin GroES (96 aa).

Belongs to the GroES chaperonin family. Heptamer of 7 subunits arranged in a ring. Interacts with the chaperonin GroEL.

It localises to the cytoplasm. In terms of biological role, together with the chaperonin GroEL, plays an essential role in assisting protein folding. The GroEL-GroES system forms a nano-cage that allows encapsulation of the non-native substrate proteins and provides a physical environment optimized to promote and accelerate protein folding. GroES binds to the apical surface of the GroEL ring, thereby capping the opening of the GroEL channel. The polypeptide is Co-chaperonin GroES (Shewanella pealeana (strain ATCC 700345 / ANG-SQ1)).